The sequence spans 939 residues: Protein translocase subunit SecA 1 (939 aa).

Residues Q85, 103–107, and D504 each bind ATP; that span reads GEGKT. Residues 848–939 form a disordered region; that stretch reads EVPVEDEKPS…QSKGGRRRKK (92 aa). 3 stretches are compositionally biased toward basic and acidic residues: residues 852–863, 872–889, and 914–925; these read EDEKPSLEKEDA, PEIR…DRLH, and PVRSEADGLTRA. Residues 926-939 show a composition bias toward basic residues; it reads ERRKQSKGGRRRKK.

The protein belongs to the SecA family. As to quaternary structure, monomer and homodimer. Part of the essential Sec protein translocation apparatus which comprises SecA, SecYEG and auxiliary proteins SecDF. Other proteins may also be involved.

Its subcellular location is the cell membrane. It localises to the cytoplasm. It catalyses the reaction ATP + H2O + cellular proteinSide 1 = ADP + phosphate + cellular proteinSide 2.. Part of the Sec protein translocase complex. Interacts with the SecYEG preprotein conducting channel. Has a central role in coupling the hydrolysis of ATP to the transfer of proteins into and across the cell membrane, serving as an ATP-driven molecular motor driving the stepwise translocation of polypeptide chains across the membrane. The chain is Protein translocase subunit SecA 1 from Streptomyces avermitilis (strain ATCC 31267 / DSM 46492 / JCM 5070 / NBRC 14893 / NCIMB 12804 / NRRL 8165 / MA-4680).